The sequence spans 510 residues: Replication factor C large subunit (510 aa).

Residue 48 to 55 (GPPGTGKT) participates in ATP binding. Residues 459-510 (MESMLERKREESEVEEEAKEIEEAVEKAEEEEEREEKKKEGGGEQRTLDAFF) are disordered. The span at 493–510 (EEKKKEGGGEQRTLDAFF) shows a compositional bias: basic and acidic residues.

This sequence belongs to the activator 1 small subunits family. RfcL subfamily. Heteromultimer composed of small subunits (RfcS) and large subunits (RfcL).

Part of the RFC clamp loader complex which loads the PCNA sliding clamp onto DNA. The sequence is that of Replication factor C large subunit from Methanopyrus kandleri (strain AV19 / DSM 6324 / JCM 9639 / NBRC 100938).